The primary structure comprises 273 residues: Dermonecrotic toxin LspiSicTox-betaIE1ii (273 aa).

Residue His5 is part of the active site. Positions 25 and 27 each coordinate Mg(2+). The active-site Nucleophile is His41. 2 cysteine pairs are disulfide-bonded: Cys45/Cys51 and Cys47/Cys189. Asp85 contacts Mg(2+).

The protein belongs to the arthropod phospholipase D family. Class II subfamily. Mg(2+) serves as cofactor. In terms of tissue distribution, expressed by the venom gland.

It localises to the secreted. It catalyses the reaction an N-(acyl)-sphingosylphosphocholine = an N-(acyl)-sphingosyl-1,3-cyclic phosphate + choline. The enzyme catalyses an N-(acyl)-sphingosylphosphoethanolamine = an N-(acyl)-sphingosyl-1,3-cyclic phosphate + ethanolamine. It carries out the reaction a 1-acyl-sn-glycero-3-phosphocholine = a 1-acyl-sn-glycero-2,3-cyclic phosphate + choline. The catalysed reaction is a 1-acyl-sn-glycero-3-phosphoethanolamine = a 1-acyl-sn-glycero-2,3-cyclic phosphate + ethanolamine. Its function is as follows. Dermonecrotic toxins cleave the phosphodiester linkage between the phosphate and headgroup of certain phospholipids (sphingolipid and lysolipid substrates), forming an alcohol (often choline) and a cyclic phosphate. This toxin acts on sphingomyelin (SM). It may also act on ceramide phosphoethanolamine (CPE), lysophosphatidylcholine (LPC) and lysophosphatidylethanolamine (LPE), but not on lysophosphatidylserine (LPS), and lysophosphatidylglycerol (LPG). It acts by transphosphatidylation, releasing exclusively cyclic phosphate products as second products. Induces dermonecrosis, hemolysis, increased vascular permeability, edema, inflammatory response, and platelet aggregation. This is Dermonecrotic toxin LspiSicTox-betaIE1ii from Loxosceles spinulosa (Recluse spider).